We begin with the raw amino-acid sequence, 359 residues long: MNIYDQLQAVEDRYEELGELLSDPDVVSDTKRFMELSREEANTRETVTAYREYKQVIQNISDAEEMIKDASGDAELEEMAKEELKESKAAKEEYEEKLKILLLPKDPNDDKNIILEIRGAAGGDEAALFAGDLLTMYQKYAETQGWRFEVMESSVNGVGGIKEVVAMVSGQSVYSKLKYESGAHRVQRVPVTESQGRVHTSTATVLVMPEVEEVEYEIDQKDLRVDIYHASGAGGQNVNKVATAVRMVHIPTGIKVEMQEERTQQKNRDKAMKIIRARVADHFAQIAQDEQDAERKSTVGTGDRSERIRTYNFPQNRVTDHRIGLTLQKLDTILSGKMDEVIDALVMYDQTQKLEALNK.

Glutamine 236 bears the N5-methylglutamine mark.

Belongs to the prokaryotic/mitochondrial release factor family. In terms of processing, methylated by PrmC. Methylation increases the termination efficiency of RF1.

It is found in the cytoplasm. In terms of biological role, peptide chain release factor 1 directs the termination of translation in response to the peptide chain termination codons UAG and UAA. The protein is Peptide chain release factor 1 of Streptococcus agalactiae serotype Ia (strain ATCC 27591 / A909 / CDC SS700).